The sequence spans 507 residues: Ribose import ATP-binding protein RbsA (507 aa).

ABC transporter domains lie at 7–242 and 253–497; these read LEMR…VGRP and IPLG…TGVT. Position 39 to 46 (39 to 46) interacts with ATP; it reads GENGAGKS.

The protein belongs to the ABC transporter superfamily. Ribose importer (TC 3.A.1.2.1) family. As to quaternary structure, the complex is composed of an ATP-binding protein (RbsA), two transmembrane proteins (RbsC) and a solute-binding protein (RbsB).

The protein localises to the cell inner membrane. It catalyses the reaction D-ribose(out) + ATP + H2O = D-ribose(in) + ADP + phosphate + H(+). In terms of biological role, part of the ABC transporter complex RbsABC involved in ribose import. Responsible for energy coupling to the transport system. This Yersinia pestis bv. Antiqua (strain Antiqua) protein is Ribose import ATP-binding protein RbsA.